We begin with the raw amino-acid sequence, 426 residues long: Serine--tRNA ligase (426 aa).

Thr-233–Glu-235 is an L-serine binding site. Residue Arg-264–Glu-266 participates in ATP binding. Glu-287 contacts L-serine. Glu-351–Ser-354 contributes to the ATP binding site. Ser-387 contributes to the L-serine binding site.

It belongs to the class-II aminoacyl-tRNA synthetase family. Type-1 seryl-tRNA synthetase subfamily. Homodimer. The tRNA molecule binds across the dimer.

The protein resides in the cytoplasm. It catalyses the reaction tRNA(Ser) + L-serine + ATP = L-seryl-tRNA(Ser) + AMP + diphosphate + H(+). The enzyme catalyses tRNA(Sec) + L-serine + ATP = L-seryl-tRNA(Sec) + AMP + diphosphate + H(+). It functions in the pathway aminoacyl-tRNA biosynthesis; selenocysteinyl-tRNA(Sec) biosynthesis; L-seryl-tRNA(Sec) from L-serine and tRNA(Sec): step 1/1. In terms of biological role, catalyzes the attachment of serine to tRNA(Ser). Is also able to aminoacylate tRNA(Sec) with serine, to form the misacylated tRNA L-seryl-tRNA(Sec), which will be further converted into selenocysteinyl-tRNA(Sec). This chain is Serine--tRNA ligase, found in Clostridium botulinum (strain Loch Maree / Type A3).